Here is a 531-residue protein sequence, read N- to C-terminus: T-complex protein 1 subunit zeta (531 aa).

N-acetylalanine is present on Ala2. Position 5 is an N6-acetyllysine (Lys5). ADP is bound at residue Gly39. Gly39 is a binding site for ATP. Asp90 lines the Mg(2+) pocket. Residues Gly91, Thr92, Thr93, Ser94, Thr158, and Lys159 each contribute to the ADP site. ATP-binding residues include Gly91, Thr92, and Thr93. N6-acetyllysine is present on Lys199. Position 205 is a phosphoserine (Ser205). A Glycyl lysine isopeptide (Lys-Gly) (interchain with G-Cter in SUMO2) cross-link involves residue Lys251. N6-acetyllysine is present on residues Lys287, Lys365, Lys377, and Lys388. Ala411 provides a ligand contact to ADP. Positions 411, 412, 496, and 501 each coordinate ATP. Asp496 provides a ligand contact to ADP.

It belongs to the TCP-1 chaperonin family. Component of the chaperonin-containing T-complex (TRiC), a hexadecamer composed of two identical back-to-back stacked rings enclosing a protein folding chamber. Each ring is made up of eight different subunits: TCP1/CCT1, CCT2, CCT3, CCT4, CCT5, CCT6A/CCT6, CCT7, CCT8. Interacts with PACRG.

The protein resides in the cytoplasm. The catalysed reaction is ATP + H2O = ADP + phosphate + H(+). Component of the chaperonin-containing T-complex (TRiC), a molecular chaperone complex that assists the folding of actin, tubulin and other proteins upon ATP hydrolysis. The TRiC complex mediates the folding of WRAP53/TCAB1, thereby regulating telomere maintenance. The polypeptide is T-complex protein 1 subunit zeta (CCT6) (Oryctolagus cuniculus (Rabbit)).